The primary structure comprises 937 residues: C-1-tetrahydrofolate synthase, cytoplasmic (937 aa).

The methylenetetrahydrofolate dehydrogenase and cyclohydrolase stretch occupies residues 1–309 (MALLLEGTSL…TLLPLKLQTP (309 aa)). Residues 50 to 54 (YVRMK) and 97 to 99 (VQL) each bind substrate. NADP(+) is bound by residues 168 to 170 (GRS) and S193. 268-272 (PGSVG) lines the substrate pocket. The formyltetrahydrofolate synthetase stretch occupies residues 310 to 937 (VPSDIEIARS…AENGDIVGLS (628 aa)). Position 374–381 (374–381 (TPFGEGKS)) interacts with ATP.

The protein in the N-terminal section; belongs to the tetrahydrofolate dehydrogenase/cyclohydrolase family. It in the C-terminal section; belongs to the formate--tetrahydrofolate ligase family. Homodimer.

Its subcellular location is the cytoplasm. It catalyses the reaction (6R)-5,10-methylene-5,6,7,8-tetrahydrofolate + NADP(+) = (6R)-5,10-methenyltetrahydrofolate + NADPH. The enzyme catalyses (6R)-5,10-methenyltetrahydrofolate + H2O = (6R)-10-formyltetrahydrofolate + H(+). It carries out the reaction (6S)-5,6,7,8-tetrahydrofolate + formate + ATP = (6R)-10-formyltetrahydrofolate + ADP + phosphate. Its pathway is one-carbon metabolism; tetrahydrofolate interconversion. In Schizosaccharomyces pombe (strain 972 / ATCC 24843) (Fission yeast), this protein is C-1-tetrahydrofolate synthase, cytoplasmic.